Consider the following 337-residue polypeptide: Glyceraldehyde-3-phosphate dehydrogenase (337 aa).

NAD(+) contacts are provided by residues 12–13 (RI), D34, and R79. Residues 150–152 (SCT), T181, 210–211 (TG), and R233 each bind D-glyceraldehyde 3-phosphate. The active-site Nucleophile is the C151. N315 is a binding site for NAD(+).

The protein belongs to the glyceraldehyde-3-phosphate dehydrogenase family. As to quaternary structure, homotetramer.

The protein resides in the cytoplasm. It catalyses the reaction D-glyceraldehyde 3-phosphate + phosphate + NAD(+) = (2R)-3-phospho-glyceroyl phosphate + NADH + H(+). It functions in the pathway carbohydrate degradation; glycolysis; pyruvate from D-glyceraldehyde 3-phosphate: step 1/5. The polypeptide is Glyceraldehyde-3-phosphate dehydrogenase (GPD) (Omphalotus olearius (Jack o'lantern)).